The sequence spans 78 residues: Exodeoxyribonuclease 7 small subunit (78 aa).

The protein belongs to the XseB family. In terms of assembly, heterooligomer composed of large and small subunits.

Its subcellular location is the cytoplasm. It catalyses the reaction Exonucleolytic cleavage in either 5'- to 3'- or 3'- to 5'-direction to yield nucleoside 5'-phosphates.. Its function is as follows. Bidirectionally degrades single-stranded DNA into large acid-insoluble oligonucleotides, which are then degraded further into small acid-soluble oligonucleotides. The polypeptide is Exodeoxyribonuclease 7 small subunit (Synechococcus sp. (strain JA-3-3Ab) (Cyanobacteria bacterium Yellowstone A-Prime)).